Consider the following 244-residue polypeptide: Ribonuclease PH (244 aa).

Residues R90 and 128 to 130 contribute to the phosphate site; that span reads GTR.

It belongs to the RNase PH family. In terms of assembly, homohexameric ring arranged as a trimer of dimers.

The catalysed reaction is tRNA(n+1) + phosphate = tRNA(n) + a ribonucleoside 5'-diphosphate. Phosphorolytic 3'-5' exoribonuclease that plays an important role in tRNA 3'-end maturation. Removes nucleotide residues following the 3'-CCA terminus of tRNAs; can also add nucleotides to the ends of RNA molecules by using nucleoside diphosphates as substrates, but this may not be physiologically important. Probably plays a role in initiation of 16S rRNA degradation (leading to ribosome degradation) during starvation. The chain is Ribonuclease PH from Prochlorococcus marinus (strain MIT 9313).